The sequence spans 239 residues: Pyridoxine 5'-phosphate synthase (239 aa).

3-amino-2-oxopropyl phosphate is bound at residue asparagine 7. 9–10 serves as a coordination point for 1-deoxy-D-xylulose 5-phosphate; the sequence is DH. 3-amino-2-oxopropyl phosphate is bound at residue arginine 18. The active-site Proton acceptor is histidine 43. 1-deoxy-D-xylulose 5-phosphate is bound by residues arginine 45 and histidine 50. The active-site Proton acceptor is the glutamate 70. Position 100 (threonine 100) interacts with 1-deoxy-D-xylulose 5-phosphate. Histidine 191 functions as the Proton donor in the catalytic mechanism. 3-amino-2-oxopropyl phosphate is bound by residues glycine 192 and 213–214; that span reads GH.

It belongs to the PNP synthase family. In terms of assembly, homooctamer; tetramer of dimers.

It localises to the cytoplasm. The enzyme catalyses 3-amino-2-oxopropyl phosphate + 1-deoxy-D-xylulose 5-phosphate = pyridoxine 5'-phosphate + phosphate + 2 H2O + H(+). Its pathway is cofactor biosynthesis; pyridoxine 5'-phosphate biosynthesis; pyridoxine 5'-phosphate from D-erythrose 4-phosphate: step 5/5. In terms of biological role, catalyzes the complicated ring closure reaction between the two acyclic compounds 1-deoxy-D-xylulose-5-phosphate (DXP) and 3-amino-2-oxopropyl phosphate (1-amino-acetone-3-phosphate or AAP) to form pyridoxine 5'-phosphate (PNP) and inorganic phosphate. This chain is Pyridoxine 5'-phosphate synthase, found in Geotalea daltonii (strain DSM 22248 / JCM 15807 / FRC-32) (Geobacter daltonii).